Here is a 362-residue protein sequence, read N- to C-terminus: Anthranilate phosphoribosyltransferase 2 (362 aa).

5-phospho-alpha-D-ribose 1-diphosphate is bound by residues Gly103, 106–107 (GD), Thr111, 113–116 (NIST), 131–139 (KHGNRSASS), and Ser143. Gly103 is a binding site for anthranilate. Mg(2+) is bound at residue Ser115. Asn134 contacts anthranilate. Arg189 provides a ligand contact to anthranilate. 2 residues coordinate Mg(2+): Asp248 and Glu249.

Belongs to the anthranilate phosphoribosyltransferase family. In terms of assembly, homodimer. Requires Mg(2+) as cofactor.

The catalysed reaction is N-(5-phospho-beta-D-ribosyl)anthranilate + diphosphate = 5-phospho-alpha-D-ribose 1-diphosphate + anthranilate. It functions in the pathway amino-acid biosynthesis; L-tryptophan biosynthesis; L-tryptophan from chorismate: step 2/5. Catalyzes the transfer of the phosphoribosyl group of 5-phosphorylribose-1-pyrophosphate (PRPP) to anthranilate to yield N-(5'-phosphoribosyl)-anthranilate (PRA). The chain is Anthranilate phosphoribosyltransferase 2 from Nostoc sp. (strain PCC 7120 / SAG 25.82 / UTEX 2576).